The primary structure comprises 283 residues: Octanoyl-[GcvH]:protein N-octanoyltransferase (283 aa).

A BPL/LPL catalytic domain is found at 42-248 (GQSDAVVRTW…TLQSFGGELY (207 aa)). Cysteine 147 acts as the Acyl-thioester intermediate in catalysis.

It belongs to the octanoyltransferase LipL family.

It carries out the reaction N(6)-octanoyl-L-lysyl-[glycine-cleavage complex H protein] + L-lysyl-[lipoyl-carrier protein] = N(6)-octanoyl-L-lysyl-[lipoyl-carrier protein] + L-lysyl-[glycine-cleavage complex H protein]. Its pathway is protein modification; protein lipoylation via endogenous pathway; protein N(6)-(lipoyl)lysine from octanoyl-[acyl-carrier-protein]. Its function is as follows. Catalyzes the amidotransfer (transamidation) of the octanoyl moiety from octanoyl-GcvH to the lipoyl domain of the E2 subunit of lipoate-dependent enzymes. The sequence is that of Octanoyl-[GcvH]:protein N-octanoyltransferase from Geobacillus kaustophilus (strain HTA426).